The sequence spans 568 residues: Cytosolic purine 5'-nucleotidase (568 aa).

Asp-52 serves as the catalytic Nucleophile. IMP-binding residues include Asp-52 and Asp-54. Residues Asp-52 and Asp-54 each coordinate Mg(2+). The active-site Proton donor is the Asp-54. Arg-144 and Asn-154 together coordinate ATP. IMP contacts are provided by Arg-202, Asp-206, Lys-215, Thr-249, Asn-250, Ser-251, and Lys-292. Asp-351 is a Mg(2+) binding site. The ATP site is built by Gln-453 and Arg-456. The segment at 528–568 (ISEIKPPNLFPQKPQEITHCHDEDDDEEEEEEEEEEEEEEE) is disordered. Residues 548-568 (HDEDDDEEEEEEEEEEEEEEE) form a required for tetramer assembly region. The span at 550–568 (EDDDEEEEEEEEEEEEEEE) shows a compositional bias: acidic residues.

Belongs to the 5'(3')-deoxyribonucleotidase family. Homotetramer. Requires Mg(2+) as cofactor.

The protein resides in the cytoplasm. It is found in the cytosol. It catalyses the reaction a ribonucleoside 5'-phosphate + H2O = a ribonucleoside + phosphate. The enzyme catalyses a 2'-deoxyribonucleoside + a ribonucleoside 5'-phosphate = a ribonucleoside + a 2'-deoxyribonucleoside 5'-phosphate. It carries out the reaction IMP + H2O = inosine + phosphate. The catalysed reaction is GMP + H2O = guanosine + phosphate. It catalyses the reaction dIMP + H2O = 2'-deoxyinosine + phosphate. The enzyme catalyses dGMP + H2O = 2'-deoxyguanosine + phosphate. It carries out the reaction XMP + H2O = xanthosine + phosphate. The catalysed reaction is inosine + GMP = guanosine + IMP. It catalyses the reaction dGMP + inosine = 2'-deoxyguanosine + IMP. The enzyme catalyses dIMP + inosine = 2'-deoxyinosine + IMP. It carries out the reaction inosine + UMP = uridine + IMP. The catalysed reaction is inosine + CMP = cytidine + IMP. It catalyses the reaction inosine + AMP = IMP + adenosine. Its activity is regulated as follows. Allosterically activated by various compounds including ATP, 2,3-BPG/2,3-Bisphosphoglyceric acid and Ap4A/P1,P4-bis(5'-adenosyl) tetraphosphate. Binding of an allosteric activator is a prerequisiste to magnesium and substrate binding. Inhibited by inorganic phosphate. In terms of biological role, broad specificity cytosolic 5'-nucleotidase that catalyzes the dephosphorylation of 6-hydroxypurine nucleoside 5'-monophosphates. In addition, possesses a phosphotransferase activity by which it can transfer a phosphate from a donor nucleoside monophosphate to an acceptor nucleoside, preferably inosine, deoxyinosine and guanosine. Has the highest activities for IMP and GMP followed by dIMP, dGMP and XMP. Could also catalyze the transfer of phosphates from pyrimidine monophosphates but with lower efficiency. Through these activities regulates the purine nucleoside/nucleotide pools within the cell. The protein is Cytosolic purine 5'-nucleotidase (nt5c2) of Xenopus tropicalis (Western clawed frog).